We begin with the raw amino-acid sequence, 1587 residues long: NHS-like protein 1 (1587 aa).

S24 bears the Phosphoserine mark. Disordered stretches follow at residues 140–163 (FAAG…KCSL) and 176–202 (RPKT…PLPT). The segment covering 179 to 196 (TPTSGDFSDLHTQTNWTK) has biased composition (polar residues). Phosphoserine is present on residues S197 and S328. Positions 431–446 (SAGQLDSRTPGSSSYS) are enriched in polar residues. Disordered stretches follow at residues 431 to 470 (SAGQ…PRHH) and 549 to 584 (SEPW…VSSC). The segment covering 449 to 470 (KPRDRPTPRCSVKDDHQSPRHH) has biased composition (basic and acidic residues). A Phosphoserine modification is found at S563. Residues 573 to 584 (GCSTPTSNVSSC) are compositionally biased toward polar residues. S629 carries the phosphoserine modification. 3 disordered regions span residues 661–687 (KAKK…QTNG), 705–767 (SLPG…SSVK), and 789–1059 (NPTG…RPPM). Residues 705–720 (SLPGKGGSSPSQSPCS) show a composition bias toward low complexity. Composition is skewed to polar residues over residues 730–750 (SRSQ…TPNV), 757–767 (TPSQSDTSSVK), 792–801 (GGCSANTEAA), and 838–855 (RVTS…TPTA). The span at 885–911 (SLISSMSISSSSTSLSSNTSTEGSGTM) shows a compositional bias: low complexity. Pro residues-rich tracts occupy residues 923–934 (APPPPPLPPLPS), 958–972 (PLPP…PPEA), and 998–1021 (SLPP…PPLD). Residues 1040–1055 (SSREALRRPANKEEGC) show a composition bias toward basic and acidic residues. S1079 bears the Phosphoserine mark. Disordered stretches follow at residues 1083-1534 (AVLF…ARRA) and 1565-1587 (VDGI…EQKS). 2 stretches are compositionally biased toward polar residues: residues 1089 to 1099 (PSAQEQRTPTA) and 1112 to 1141 (SRNS…SQSQ). Phosphoserine is present on residues S1157 and S1218. A compositionally biased stretch (basic and acidic residues) spans 1222 to 1234 (AEGEAVRSQEEKS). Over residues 1275 to 1285 (QPNTSPGPTQE) the composition is skewed to polar residues. A compositionally biased stretch (basic and acidic residues) spans 1360 to 1370 (GRKDSEDDHTR). Residues S1373 and S1375 each carry the phosphoserine modification. The residue at position 1379 (T1379) is a Phosphothreonine. Positions 1392-1409 (QVGSIQRSIKKSTTSSDN) are enriched in polar residues. The span at 1434–1447 (KSTDPRFQRSRSEP) shows a compositional bias: basic and acidic residues. 2 stretches are compositionally biased toward low complexity: residues 1448-1460 (SADS…SCSP) and 1484-1503 (SGPR…SRYS). A compositionally biased stretch (polar residues) spans 1576 to 1587 (PSEQCGGTEQKS).

The protein belongs to the NHS family.

This is NHS-like protein 1 (Nhsl1) from Mus musculus (Mouse).